Consider the following 877-residue polypeptide: Probable alpha/beta-glucosidase agdC (877 aa).

Residues 1–14 form the signal peptide; that stretch reads MLGSLLLLAPLAGA. N-linked (GlcNAc...) asparagine glycosylation is found at asparagine 171, asparagine 293, and asparagine 373. Catalysis depends on aspartate 422, which acts as the Nucleophile. Glutamate 425 is a catalytic residue. Residues 432-476 form a disordered region; that stretch reads DPCTDPERYSSENNLPPAPPPVRSSSPRPLPGFPADFQPSSASRS. Residues 447–463 are compositionally biased toward pro residues; it reads PPAPPPVRSSSPRPLPG. Residue asparagine 508 is glycosylated (N-linked (GlcNAc...) asparagine). Aspartate 573 functions as the Proton donor in the catalytic mechanism. N-linked (GlcNAc...) asparagine glycans are attached at residues asparagine 574, asparagine 610, and asparagine 744.

It belongs to the glycosyl hydrolase 31 family.

The protein resides in the secreted. It carries out the reaction Hydrolysis of terminal, non-reducing (1-&gt;4)-linked alpha-D-glucose residues with release of alpha-D-glucose.. The catalysed reaction is Hydrolysis of terminal, non-reducing beta-D-glucosyl residues with release of beta-D-glucose.. Functionally, glucosidase involved in the degradation of cellulosic biomass. Has both alpha- and beta-glucosidase activity. In Aspergillus oryzae (strain ATCC 42149 / RIB 40) (Yellow koji mold), this protein is Probable alpha/beta-glucosidase agdC (agdC).